The primary structure comprises 442 residues: ORC1-type DNA replication protein 8 (442 aa).

Residues 66–70 (VGKTA) and tyrosine 218 contribute to the ATP site.

The protein belongs to the CDC6/cdc18 family.

In terms of biological role, involved in regulation of DNA replication. The sequence is that of ORC1-type DNA replication protein 8 (cdc6h) from Haloarcula marismortui (strain ATCC 43049 / DSM 3752 / JCM 8966 / VKM B-1809) (Halobacterium marismortui).